The sequence spans 383 residues: 3-phytase (383 aa).

A signal peptide spans 1 to 26 (MNHSKTLLLTAAAGLMLTCGAVSSQA). A propeptide spanning residues 27–30 (KHKL) is cleaved from the precursor. The BPP domain occupies 31–362 (SDPYHFTVNA…VPWERIADKI (332 aa)). Residues 364-383 (FHPQVNKQVDPRKMTDRSGK) form a disordered region. Positions 372–383 (VDPRKMTDRSGK) are enriched in basic and acidic residues.

It localises to the secreted. It catalyses the reaction 1D-myo-inositol hexakisphosphate + H2O = 1D-myo-inositol 1,2,4,5,6-pentakisphosphate + phosphate. In Bacillus sp. (strain DS11), this protein is 3-phytase (phy).